Reading from the N-terminus, the 876-residue chain is GRB2-associated and regulator of MAPK protein (876 aa).

A CABIT region spans residues 12-320 (KDVKWSPVAM…HQVKGDMWPE (309 aa)). At Tyr-105 the chain carries Phosphotyrosine. The interval 427–448 (GDSGSDYLFPEANEESAGIPGK) is disordered. Position 453 is a phosphotyrosine (Tyr-453). Disordered regions lie at residues 460–501 (EGKP…ATLG) and 530–572 (LNAP…SYYS). The segment at 498 to 550 (ATLGATIKSSEIALPPPPVPPKSEAVREECRLLNAPPVPPRSAKPLSTSPSIP) is necessary for interaction with GRB2. Over residues 560–572 (QTRSPSPTLSYYS) the composition is skewed to polar residues. 2 positions are modified to phosphoserine: Ser-609 and Ser-613. Polar residues-rich tracts occupy residues 630-639 (SGASENQTRS) and 647-657 (RSYSYPRQKTP). Disordered regions lie at residues 630 to 664 (SGAS…KRTC) and 722 to 759 (CPAL…TAGS). In terms of domain architecture, SAM spans 811-876 (LSIEEVSKSL…QFINGWRPKI (66 aa)).

This sequence belongs to the GAREM family. In terms of assembly, interacts with EGFR. Interacts (via proline-rich domain and phosphorylated at Tyr-105 and Tyr-453) with GRB2 (via SH3 domains); the interaction occurs upon EGF stimulation. Interacts (phosphorylated at Tyr-453) with PTPN11; the interaction increases MAPK/ERK activity and does not affect the GRB2/SOS complex formation. In terms of processing, on EGF stimulation, phosphorylated on Tyr-105 and Tyr-453.

Functionally, acts as an adapter protein that plays a role in intracellular signaling cascades triggered either by the cell surface activated epidermal growth factor receptor and/or cytoplasmic protein tyrosine kinases. Promotes activation of the MAPK/ERK signaling pathway. Plays a role in the regulation of cell proliferation. The sequence is that of GRB2-associated and regulator of MAPK protein (Garem1) from Mus musculus (Mouse).